The chain runs to 225 residues: UPF0173 metal-dependent hydrolase PAE2160 (225 aa).

This sequence belongs to the UPF0173 family.

In Pyrobaculum aerophilum (strain ATCC 51768 / DSM 7523 / JCM 9630 / CIP 104966 / NBRC 100827 / IM2), this protein is UPF0173 metal-dependent hydrolase PAE2160.